We begin with the raw amino-acid sequence, 216 residues long: UDP-N-acetylglucosamine transferase subunit ALG14 (216 aa).

Topologically, residues 1–3 (MVC) are lumenal. Residues 4 to 24 (VLTLAASAGGLAVLLIVRLWA) form a helical membrane-spanning segment. Over 25-216 (VLRSHPVTPR…PKSVYLGRIV (192 aa)) the chain is Cytoplasmic.

It belongs to the ALG14 family. Forms with ALG13 the active heterodimeric UDP-N-acetylglucosamine transferase complex.

It localises to the endoplasmic reticulum membrane. In terms of biological role, part of the UDP-N-acetylglucosamine transferase complex that operates in the biosynthetic pathway of dolichol-linked oligosaccharides, the glycan precursors employed in protein asparagine (N)-glycosylation. The assembly of dolichol-linked oligosaccharides begins on the cytosolic side of the endoplasmic reticulum membrane and finishes in its lumen. The sequential addition of sugars to dolichol pyrophosphate produces dolichol-linked oligosaccharides containing fourteen sugars, including two GlcNAcs, nine mannoses and three glucoses. Once assembled, the oligosaccharides are transferred from the lipid to nascent proteins by oligosaccharyltransferases. Functions as a protein-membrane adapter recruiting ALG13 at the cytoplasmic face of the endoplasmic reticulum, where the complex catalyzes the second step of dolichol pyrophosphate biosynthesis, transferring a beta1,4-linked N-acetylglucosamine (GlcNAc) from UDP-GlcNAc to GlcNAc-pyrophosphatedolichol (Gn-PDol) to produce N,N'-diacetylchitobiosyl diphosphodolichol. N,N'-diacetylchitobiosyl diphosphodolichol is a substrate for ALG1, the following enzyme in the biosynthetic pathway. The protein is UDP-N-acetylglucosamine transferase subunit ALG14 of Rattus norvegicus (Rat).